The sequence spans 236 residues: Small ribosomal subunit protein eS6 (236 aa).

A phosphoserine mark is found at Ser232 and Ser233.

The protein belongs to the eukaryotic ribosomal protein eS6 family. In terms of processing, phosphorylated.

The sequence is that of Small ribosomal subunit protein eS6 (RPS6) from Eremothecium gossypii (strain ATCC 10895 / CBS 109.51 / FGSC 9923 / NRRL Y-1056) (Yeast).